Reading from the N-terminus, the 519-residue chain is Acetylcholine receptor subunit beta-like 2 (519 aa).

A signal peptide spans 1–18 (MWHWSLLCVFLLVPLANS). The Extracellular segment spans residues 19–244 (TAPISFEANP…ITFKLTMRRK (226 aa)). N50 carries N-linked (GlcNAc...) asparagine glycosylation. An intrachain disulfide couples C154 to C168. Transmembrane regions (helical) follow at residues 245 to 269 (TLFYTVNLIVPCVALTFLTVLVFYL), 277 to 295 (VTLCISILVSLTVFFLLLA), and 311 to 332 (YLLFTMILVSLSVWTTVCVLNI). The Cytoplasmic segment spans residues 333–462 (HFRSPSTHNM…WKFVSMVLDR (130 aa)). The helical transmembrane segment at 463 to 481 (FFLWLFTLSCVFGTLAIIC) threads the bilayer.

This sequence belongs to the ligand-gated ion channel (TC 1.A.9) family. Acetylcholine receptor (TC 1.A.9.1) subfamily. CNS in embryos.

The protein localises to the postsynaptic cell membrane. The protein resides in the cell membrane. In terms of biological role, after binding acetylcholine, the AChR responds by an extensive change in conformation that affects all subunits and leads to opening of an ion-conducting channel across the plasma membrane. The polypeptide is Acetylcholine receptor subunit beta-like 2 (nAChRbeta2) (Drosophila melanogaster (Fruit fly)).